A 318-amino-acid polypeptide reads, in one-letter code: Aspartate carbamoyltransferase catalytic subunit (318 aa).

2 residues coordinate carbamoyl phosphate: arginine 62 and threonine 63. Lysine 90 provides a ligand contact to L-aspartate. Carbamoyl phosphate-binding residues include arginine 112, histidine 140, and glutamine 143. Residues arginine 173 and arginine 227 each contribute to the L-aspartate site. Positions 268 and 269 each coordinate carbamoyl phosphate.

Belongs to the aspartate/ornithine carbamoyltransferase superfamily. ATCase family. In terms of assembly, heterododecamer (2C3:3R2) of six catalytic PyrB chains organized as two trimers (C3), and six regulatory PyrI chains organized as three dimers (R2).

It carries out the reaction carbamoyl phosphate + L-aspartate = N-carbamoyl-L-aspartate + phosphate + H(+). It functions in the pathway pyrimidine metabolism; UMP biosynthesis via de novo pathway; (S)-dihydroorotate from bicarbonate: step 2/3. Functionally, catalyzes the condensation of carbamoyl phosphate and aspartate to form carbamoyl aspartate and inorganic phosphate, the committed step in the de novo pyrimidine nucleotide biosynthesis pathway. The polypeptide is Aspartate carbamoyltransferase catalytic subunit (Desulfotalea psychrophila (strain LSv54 / DSM 12343)).